We begin with the raw amino-acid sequence, 291 residues long: MRTGRIIKSLSGVYRVDSDGEMFDTKPRGLFRKKKFSPIVGDIVDFEIENVTEGYIQHVHERQNELKRPPVSNIDHLVIVMSAVEPDFSTQLVDRFLVIAHSYGLNPRIVVTKKDMASDSQIERIEKDLDVYRAIGYPVQFVGKNDNIETIFDEWGSGLAVLSGQSGVGKSTLLNAYRPDLAIETNQISKSLNRGKHTTRHVELFERKGGFVADTPGFSALDFDHIHKDEVKDYFLEIQEYGQGCKFRNCNHIKEPQCNVKAQVEAGNIAQFRYDHYVQLFEEIANRKERY.

In terms of domain architecture, CP-type G spans 63-221 (QNELKRPPVS…VADTPGFSAL (159 aa)). Residues 112–115 (TKKD) and 164–172 (GQSGVGKST) each bind GTP. 4 residues coordinate Zn(2+): Cys245, Cys250, His252, and Cys258.

The protein belongs to the TRAFAC class YlqF/YawG GTPase family. RsgA subfamily. In terms of assembly, monomer. Associates with 30S ribosomal subunit, binds 16S rRNA. The cofactor is Zn(2+).

Its subcellular location is the cytoplasm. In terms of biological role, one of several proteins that assist in the late maturation steps of the functional core of the 30S ribosomal subunit. Helps release RbfA from mature subunits. May play a role in the assembly of ribosomal proteins into the subunit. Circularly permuted GTPase that catalyzes slow GTP hydrolysis, GTPase activity is stimulated by the 30S ribosomal subunit. The protein is Small ribosomal subunit biogenesis GTPase RsgA of Staphylococcus carnosus (strain TM300).